The following is a 351-amino-acid chain: Phosphoribosylformylglycinamidine cyclo-ligase (351 aa).

It belongs to the AIR synthase family.

It is found in the cytoplasm. The enzyme catalyses 2-formamido-N(1)-(5-O-phospho-beta-D-ribosyl)acetamidine + ATP = 5-amino-1-(5-phospho-beta-D-ribosyl)imidazole + ADP + phosphate + H(+). It participates in purine metabolism; IMP biosynthesis via de novo pathway; 5-amino-1-(5-phospho-D-ribosyl)imidazole from N(2)-formyl-N(1)-(5-phospho-D-ribosyl)glycinamide: step 2/2. In Burkholderia ambifaria (strain MC40-6), this protein is Phosphoribosylformylglycinamidine cyclo-ligase.